A 356-amino-acid chain; its full sequence is Histidinol-phosphate aminotransferase 2 (356 aa).

Lys-213 is subject to N6-(pyridoxal phosphate)lysine.

The protein belongs to the class-II pyridoxal-phosphate-dependent aminotransferase family. Histidinol-phosphate aminotransferase subfamily. As to quaternary structure, homodimer. Pyridoxal 5'-phosphate is required as a cofactor.

It carries out the reaction L-histidinol phosphate + 2-oxoglutarate = 3-(imidazol-4-yl)-2-oxopropyl phosphate + L-glutamate. Its pathway is amino-acid biosynthesis; L-histidine biosynthesis; L-histidine from 5-phospho-alpha-D-ribose 1-diphosphate: step 7/9. In Burkholderia mallei (strain ATCC 23344), this protein is Histidinol-phosphate aminotransferase 2.